Here is a 151-residue protein sequence, read N- to C-terminus: Transcriptional regulator MraZ (151 aa).

2 SpoVT-AbrB domains span residues 5-52 (ANAI…PLDE) and 81-124 (AVDL…DEDA).

The protein belongs to the MraZ family. In terms of assembly, forms oligomers.

The protein resides in the cytoplasm. The protein localises to the nucleoid. The polypeptide is Transcriptional regulator MraZ (Pseudomonas fluorescens (strain SBW25)).